Here is a 219-residue protein sequence, read N- to C-terminus: MQGAERGRMQMPDDRLEREAGGLVAGVDEVGRGPLAGPVVAAAVLLPASGFPAHLAGLIDDSKKLDAAARDRAFAALLAEPGITIGIGAASVTEIGRLNILHASMLAMRRAVERLPTIPDLALVDGNRAPALPCAARCVVGGDAKCLSIAAASIIAKVVRDRAMARLARRYPVYGWERNAGYPTPAHRAGLTEFGPTPHHRTAFGLVRQLLAMRMEAVV.

Positions 22–219 constitute an RNase H type-2 domain; that stretch reads GLVAGVDEVG…LLAMRMEAVV (198 aa). 3 residues coordinate a divalent metal cation: Asp28, Glu29, and Asp125.

The protein belongs to the RNase HII family. Mn(2+) serves as cofactor. It depends on Mg(2+) as a cofactor.

It localises to the cytoplasm. The catalysed reaction is Endonucleolytic cleavage to 5'-phosphomonoester.. Its function is as follows. Endonuclease that specifically degrades the RNA of RNA-DNA hybrids. The polypeptide is Ribonuclease HII (Granulibacter bethesdensis (strain ATCC BAA-1260 / CGDNIH1)).